We begin with the raw amino-acid sequence, 338 residues long: Holliday junction branch migration complex subunit RuvB (338 aa).

Positions 1–181 are large ATPase domain (RuvB-L); sequence MTRTITPSIT…FGVISRLEFY (181 aa). ATP contacts are provided by residues leucine 20, arginine 21, glycine 62, lysine 65, threonine 66, threonine 67, 128-130, arginine 171, tyrosine 181, and arginine 218; that span reads EDF. Residue threonine 66 participates in Mg(2+) binding. Residues 182-252 are small ATPAse domain (RuvB-S); sequence TDEELAFIIT…VVQDALALLE (71 aa). The interval 255–338 is head domain (RuvB-H); the sequence is EMGFDQMDRM…VPEPPQGKLF (84 aa). DNA contacts are provided by arginine 310 and arginine 315.

The protein belongs to the RuvB family. As to quaternary structure, homohexamer. Forms an RuvA(8)-RuvB(12)-Holliday junction (HJ) complex. HJ DNA is sandwiched between 2 RuvA tetramers; dsDNA enters through RuvA and exits via RuvB. An RuvB hexamer assembles on each DNA strand where it exits the tetramer. Each RuvB hexamer is contacted by two RuvA subunits (via domain III) on 2 adjacent RuvB subunits; this complex drives branch migration. In the full resolvosome a probable DNA-RuvA(4)-RuvB(12)-RuvC(2) complex forms which resolves the HJ.

The protein resides in the cytoplasm. The catalysed reaction is ATP + H2O = ADP + phosphate + H(+). Its function is as follows. The RuvA-RuvB-RuvC complex processes Holliday junction (HJ) DNA during genetic recombination and DNA repair, while the RuvA-RuvB complex plays an important role in the rescue of blocked DNA replication forks via replication fork reversal (RFR). RuvA specifically binds to HJ cruciform DNA, conferring on it an open structure. The RuvB hexamer acts as an ATP-dependent pump, pulling dsDNA into and through the RuvAB complex. RuvB forms 2 homohexamers on either side of HJ DNA bound by 1 or 2 RuvA tetramers; 4 subunits per hexamer contact DNA at a time. Coordinated motions by a converter formed by DNA-disengaged RuvB subunits stimulates ATP hydrolysis and nucleotide exchange. Immobilization of the converter enables RuvB to convert the ATP-contained energy into a lever motion, pulling 2 nucleotides of DNA out of the RuvA tetramer per ATP hydrolyzed, thus driving DNA branch migration. The RuvB motors rotate together with the DNA substrate, which together with the progressing nucleotide cycle form the mechanistic basis for DNA recombination by continuous HJ branch migration. Branch migration allows RuvC to scan DNA until it finds its consensus sequence, where it cleaves and resolves cruciform DNA. The polypeptide is Holliday junction branch migration complex subunit RuvB (Geotalea uraniireducens (strain Rf4) (Geobacter uraniireducens)).